We begin with the raw amino-acid sequence, 147 residues long: Membrane-spanning 4-domains subfamily A member 6E (147 aa).

Residues 1–52 (MTSQPISNETIIMLPSNVINFSQAEKPEPTNQGQDSLKKRLQAKVKVIGVHS) lie on the Cytoplasmic side of the membrane. The helical transmembrane segment at 53–73 (SLAGSILSALSALVGFILLSV) threads the bilayer. Topologically, residues 74–120 (NPAALNPASLQCKLDEKDIPTRLLLSYDYHSPYTMDCHRAKASLAGT) are extracellular. A helical transmembrane segment spans residues 121–141 (LSLMLVSTVLEFCLAVLTAVL). The Cytoplasmic portion of the chain corresponds to 142-147 (QWKQTV).

This sequence belongs to the MS4A family. As to expression, expressed by malignant and fetal tissue at very low levels.

It is found in the membrane. Functionally, may be involved in signal transduction as a component of a multimeric receptor complex. The protein is Membrane-spanning 4-domains subfamily A member 6E (MS4A6E) of Homo sapiens (Human).